We begin with the raw amino-acid sequence, 481 residues long: 6-phosphogluconate dehydrogenase, decarboxylating (481 aa).

NADP(+) contacts are provided by residues 11–16 (GLAVMG), 34–36 (NRT), 76–78 (VKA), and Asn-104. Substrate contacts are provided by residues Asn-104 and 130–132 (SGG). Lys-184 functions as the Proton acceptor in the catalytic mechanism. 187–188 (HN) is a binding site for substrate. The active-site Proton donor is the Glu-191. Tyr-192, Lys-259, Arg-286, Arg-445, and His-451 together coordinate substrate.

It belongs to the 6-phosphogluconate dehydrogenase family. In terms of assembly, homodimer.

It carries out the reaction 6-phospho-D-gluconate + NADP(+) = D-ribulose 5-phosphate + CO2 + NADPH. It functions in the pathway carbohydrate degradation; pentose phosphate pathway; D-ribulose 5-phosphate from D-glucose 6-phosphate (oxidative stage): step 3/3. Functionally, catalyzes the oxidative decarboxylation of 6-phosphogluconate to ribulose 5-phosphate and CO(2), with concomitant reduction of NADP to NADPH. The protein is 6-phosphogluconate dehydrogenase, decarboxylating (Pgd) of Drosophila melanogaster (Fruit fly).